A 155-amino-acid polypeptide reads, in one-letter code: Alanine- and arginine-rich domain-containing protein (155 aa).

The chain is Alanine- and arginine-rich domain-containing protein (AARD) from Homo sapiens (Human).